A 391-amino-acid polypeptide reads, in one-letter code: MTSVSLGMPAAPPPVLAPRRKTRQIKVGSVGVGSDSPISLQSMTTTPTTDINATLQQIAELTASGCDIVRVACPSADDAEALPIIAKKSQIPVIADIHFQPKYVFAAIEAGCAAVRVNPGNIRKFDDQIKEIAQAAKDHGTSIRIGVNAGSLDPRLMEKYGKATPEALVESAVWEASLFEEHDFHDFKISVKHNDPVVMVRAYELLAERGAWPLHLGVTEAGPAFQGTIKSATAFGALLSKGIGDTIRVSLSAPPVEEIKVGNQILQSLNLRPRKLEIVSCPSCGRAQVDVYTLAEEVTAGLEGMEIPLRVAVMGCVVNGPGEAREADLGVASGNGKGQIFVKGEVIKTVPESQIVETLIEEAMRIAEEYEEMGGEDGQGGIKGSPVVSVS.

The [4Fe-4S] cluster site is built by cysteine 281, cysteine 284, cysteine 316, and glutamate 323. A disordered region spans residues 372-391 (EMGGEDGQGGIKGSPVVSVS).

Belongs to the IspG family. [4Fe-4S] cluster is required as a cofactor.

The catalysed reaction is (2E)-4-hydroxy-3-methylbut-2-enyl diphosphate + oxidized [flavodoxin] + H2O + 2 H(+) = 2-C-methyl-D-erythritol 2,4-cyclic diphosphate + reduced [flavodoxin]. Its pathway is isoprenoid biosynthesis; isopentenyl diphosphate biosynthesis via DXP pathway; isopentenyl diphosphate from 1-deoxy-D-xylulose 5-phosphate: step 5/6. Functionally, converts 2C-methyl-D-erythritol 2,4-cyclodiphosphate (ME-2,4cPP) into 1-hydroxy-2-methyl-2-(E)-butenyl 4-diphosphate. In Renibacterium salmoninarum (strain ATCC 33209 / DSM 20767 / JCM 11484 / NBRC 15589 / NCIMB 2235), this protein is 4-hydroxy-3-methylbut-2-en-1-yl diphosphate synthase (flavodoxin).